A 206-amino-acid chain; its full sequence is Small ribosomal subunit protein uS4 (206 aa).

Residues 96–156 enclose the S4 RNA-binding domain; it reads GRLDNVVYRM…EKAKKQARIK (61 aa).

The protein belongs to the universal ribosomal protein uS4 family. As to quaternary structure, part of the 30S ribosomal subunit. Contacts protein S5. The interaction surface between S4 and S5 is involved in control of translational fidelity.

Its function is as follows. One of the primary rRNA binding proteins, it binds directly to 16S rRNA where it nucleates assembly of the body of the 30S subunit. Functionally, with S5 and S12 plays an important role in translational accuracy. The sequence is that of Small ribosomal subunit protein uS4 from Aeromonas hydrophila subsp. hydrophila (strain ATCC 7966 / DSM 30187 / BCRC 13018 / CCUG 14551 / JCM 1027 / KCTC 2358 / NCIMB 9240 / NCTC 8049).